An 841-amino-acid polypeptide reads, in one-letter code: MNPNSKHNTNFTNLLKPSDSDIKQFAAQHIRHLTDLLNRYAYEYYTLDAPSVPDAEYDKLFRELEALELNHPELKLPDSPTQRVGGEPLAGFAEVRHEVPMLSLTNAFSPQDENGVFDHAEMYAFDQRVRDGLDGGKPEYVIEPKFDGLAISLLYRDGVLVQAATRGDGTTGEDVTQNIKTVSNIPLRLHGENTPELIEVRGEVLMLKADFVALNKRQAENGQKPFANPRNAAAGSLRQLDSRITAQRKLHFFPYSVARQQDGFVAEEHIQELAYFQALGFSLPNGNFGCFKNIDEVLAFYEHMQQKRPELPYEIDGMVVKVNSLAQQHELGFISRAPRWAVAHKFPAEEALTIVEAIDVQIGRTGAVTPVARLQPVFVGGVTVTNATLHNQDEVSRKDVRVGDTVVVRRAGDVIPEVVRVIFERRPMRETAVAVSDGIGHRQDDLFAETPSANQTQSVPLHKPYRLPTHCPICRSEIEREEGEAVARCSGGMLCQAQRAQGLIHFASRKAMDIDGLGEKQIEQLVAQDLVRHFADLYRLDIPTLQKMKETADKTVAESDQMPSEGSSVGASGKHKKQPVKWAENILAGIEASKTPELARFLFALGIRHVGERTAKTLAQAFGTLERVRRAPEPVLACLPDIGTVVARSIAHFFAQAEQQAMIDELLAAGVAPQTQAVTIPPARHAEPQRWIARLPGFKISENKAQALWELAGKNIEGLQTDKALPTDWQAWRSEPQNAALLENLKTFFAQMPSEDEAAQGSDGINKAVAGKTFVLTGTLPTLKRDQAQSLIEAAGGKVSGSVSKKTDYVVAGEAAGSKLEKANALGVSVLSEAELLTLLG.

NAD(+) is bound by residues 54 to 58, 103 to 104, and E143; these read DAEYD and SL. Residue K145 is the N6-AMP-lysine intermediate of the active site. Residues R166, E203, K321, and K345 each coordinate NAD(+). 4 residues coordinate Zn(2+): C471, C474, C489, and C495. Residues 554–575 form a disordered region; the sequence is KTVAESDQMPSEGSSVGASGKH. The span at 561–570 shows a compositional bias: polar residues; it reads QMPSEGSSVG. Residues 764–841 form the BRCT domain; the sequence is GINKAVAGKT…SEAELLTLLG (78 aa).

The protein belongs to the NAD-dependent DNA ligase family. LigA subfamily. Mg(2+) is required as a cofactor. Requires Mn(2+) as cofactor.

The enzyme catalyses NAD(+) + (deoxyribonucleotide)n-3'-hydroxyl + 5'-phospho-(deoxyribonucleotide)m = (deoxyribonucleotide)n+m + AMP + beta-nicotinamide D-nucleotide.. Functionally, DNA ligase that catalyzes the formation of phosphodiester linkages between 5'-phosphoryl and 3'-hydroxyl groups in double-stranded DNA using NAD as a coenzyme and as the energy source for the reaction. It is essential for DNA replication and repair of damaged DNA. The protein is DNA ligase of Neisseria meningitidis serogroup C / serotype 2a (strain ATCC 700532 / DSM 15464 / FAM18).